The primary structure comprises 24 residues: Humanin-like 7 (24 aa).

This sequence belongs to the humanin family. In terms of tissue distribution, expressed in testis.

It is found in the secreted. The protein localises to the cytoplasm. Its function is as follows. Plays a role as a neuroprotective and antiapoptotic factor. This Homo sapiens (Human) protein is Humanin-like 7.